We begin with the raw amino-acid sequence, 313 residues long: Putative S-adenosyl-L-methionine-dependent methyltransferase MUL_0706 (313 aa).

S-adenosyl-L-methionine contacts are provided by residues aspartate 132 and 161-162; that span reads DL.

It belongs to the UPF0677 family.

In terms of biological role, exhibits S-adenosyl-L-methionine-dependent methyltransferase activity. This chain is Putative S-adenosyl-L-methionine-dependent methyltransferase MUL_0706, found in Mycobacterium ulcerans (strain Agy99).